Reading from the N-terminus, the 30-residue chain is Dermonecrotic toxin LlSicTox-alphaIII-1 (30 aa).

His-12 is a catalytic residue.

This sequence belongs to the arthropod phospholipase D family. Class I subfamily. Mg(2+) serves as cofactor. Contains 1 disulfide bond. Expressed by the venom gland.

Its subcellular location is the secreted. The enzyme catalyses an N-(acyl)-sphingosylphosphocholine = an N-(acyl)-sphingosyl-1,3-cyclic phosphate + choline. It catalyses the reaction an N-(acyl)-sphingosylphosphoethanolamine = an N-(acyl)-sphingosyl-1,3-cyclic phosphate + ethanolamine. The catalysed reaction is a 1-acyl-sn-glycero-3-phosphocholine = a 1-acyl-sn-glycero-2,3-cyclic phosphate + choline. It carries out the reaction a 1-acyl-sn-glycero-3-phosphoethanolamine = a 1-acyl-sn-glycero-2,3-cyclic phosphate + ethanolamine. In terms of biological role, dermonecrotic toxins cleave the phosphodiester linkage between the phosphate and headgroup of certain phospholipids (sphingolipid and lysolipid substrates), forming an alcohol (often choline) and a cyclic phosphate. This toxin acts on sphingomyelin (SM). It may also act on ceramide phosphoethanolamine (CPE), lysophosphatidylcholine (LPC) and lysophosphatidylethanolamine (LPE), but not on lysophosphatidylserine (LPS), and lysophosphatidylglycerol (LPG). It acts by transphosphatidylation, releasing exclusively cyclic phosphate products as second products. In vivo, intradermal injection induces dermonecrosis. Induces hemolysis, increased vascular permeability, edema, inflammatory response, and platelet aggregation. The chain is Dermonecrotic toxin LlSicTox-alphaIII-1 from Loxosceles laeta (South American recluse spider).